The primary structure comprises 134 residues: Profilin (134 aa).

The protein belongs to the profilin family. Occurs in many kinds of cells as a complex with monomeric actin in a 1:1 ratio.

Its subcellular location is the cytoplasm. The protein localises to the cytoskeleton. Its function is as follows. Binds to actin and affects the structure of the cytoskeleton. At high concentrations, profilin prevents the polymerization of actin, whereas it enhances it at low concentrations. By binding to PIP2, it inhibits the formation of IP3 and DG. In Apium graveolens (Celery), this protein is Profilin.